The sequence spans 504 residues: MSKDELKDKKRKVEDEELKSKKKLKKDKKDKKDKKDKKDKKDKKEKKEKKEKKDKKSETESFAASASQSDIDEFLKENEVTVSDPSGSNIVPYLDFSQVSFIDQIQKEISKFPKPTPIQAVSWPYLLAGKDVIGIAETGSGKTFAFGVPAINNIVTSGDKSSSVKVLVISPTRELASQIYDNLIVLTDACGLRSCCVYGGVPKDQQREDLRRSQVVVATPGRLLDLIEEGSVDLSHVNYLVLDEADRMLEKGFEEDIKKIIRQTRSTSRQTLMFTATWPKEVRELASSFMSEPVKVSIGNRDELSANKRITQIVEVVDPFRKEKKLLELLKKYHSGPTKNDKVLIFALYKKEASRVERNLKYNGYDVAAIHGDLSQQQRTQALNEFKAGKCNLLLATDVAARGLDIPNVKTVINLTFPLTVEDYVHRIGRTGRAGQYGTAHTLFTEQEKHLAGALVNVLNGAGQPVPEELKKFGTHTKKKEHSAYGAFFKDVDLSKKPKKITFD.

Over residues Met-1–Glu-14 the composition is skewed to basic and acidic residues. Residues Met-1 to Ser-65 form a disordered region. The segment covering Ser-20–Lys-53 has biased composition (basic residues). Positions Leu-94–Ala-120 match the Q motif motif. One can recognise a Helicase ATP-binding domain in the interval Trp-123–Val-296. Ala-136–Thr-143 provides a ligand contact to ATP. The DEAD box signature appears at Asp-243 to Asp-246. The region spanning Lys-325 to Gly-474 is the Helicase C-terminal domain.

Belongs to the DEAD box helicase family. DDX5/DBP2 subfamily.

Its subcellular location is the nucleus. The protein resides in the nucleolus. The enzyme catalyses ATP + H2O = ADP + phosphate + H(+). In terms of biological role, ATP-dependent RNA helicase required for 60S ribosomal subunit synthesis. Involved in efficient pre-rRNA processing, predominantly at site A3, which is necessary for the normal formation of 25S and 5.8S rRNAs. This chain is ATP-dependent RNA helicase DBP3 (DBP3), found in Kluyveromyces lactis (strain ATCC 8585 / CBS 2359 / DSM 70799 / NBRC 1267 / NRRL Y-1140 / WM37) (Yeast).